Consider the following 367-residue polypeptide: Protein SUPPRESSOR OF FRI 4 (367 aa).

A BED-type zinc finger spans residues 7-66 (RATEKVWCYYCDREFDDEKILVQHQKAKHFKCHVCHKKLSTASGMVIHVLQVHKENVTKV). Zn(2+) contacts are provided by Cys38, Cys41, His54, and His59. Residues 246-309 (PFSAPLPVGG…PPVIANKAPS (64 aa)) are disordered. Over residues 273–295 (PNNSIPGGTNAHSYASGPNTSGP) the composition is skewed to polar residues.

Homodimer. Component of the transcription activator complex FRI-C composed of FRI, FRL1, SUF4, FLX and FES1. Interacts with LD, ASHH2, FRL1, (via C-terminus) with FRI (via C-terminus), and with SWC6, a component of the SWR1 chromatin-remodeling complex. Binds to MED18 to regulate flowering time; recruits MED18 to FLC promoter. As to expression, expressed in root, shoot apex, leaves, stem and flowers. Expressed in expanding leaves, in the vasculature of fully expanded leaves, in the inflorescence, throughout young floral primordia, in the carpels of older flowers and in fertilized ovules.

The protein localises to the nucleus. Functionally, sequence-specific DNA binding factor that recognizes the 5'-CCAAATTTTAAGTTT-3' sequence. Recruits the FRI-C complex to the FLC promoter. Required for FRI-mediated FLC activation, but has no effect on the expression of MAF1, MAF2, MAF3, MAF5, UFC and CO. Dispensable for the reactivation of FLC in early embryogenesis, but required to maintain high levels of FLC expression in later embryonic and vegetative development. This Arabidopsis thaliana (Mouse-ear cress) protein is Protein SUPPRESSOR OF FRI 4.